The chain runs to 289 residues: MSWLEKLLDKNNIINTRKTSIPEGVWTKCPSCEQVLYRIALKENLEVCPKCNHHMRMTARDRLDSFLDKEKQSEIACEYEPKDVLNFKDKKRYKERIALAQKSTGEKDALVAMKGELLGLPIVACAFEFSFMAGSMGSVVGAKFVEAVDIAIEENRGLVCFSACGGARMQESLMALMQMAKTSAALDHLSRVGLPYISVLTDQTFGGVSASIAMMGDINIGEPEARIGFAGRRVIEQTVREKLPDGFQQSEFLLEHGALDMIVERSDMRRKIGGLIAKLTNKSIQPEAE.

The CoA carboxyltransferase N-terminal domain maps to 25 to 289; sequence VWTKCPSCEQ…TNKSIQPEAE (265 aa). 4 residues coordinate Zn(2+): cysteine 29, cysteine 32, cysteine 48, and cysteine 51. A C4-type zinc finger spans residues 29-51; sequence CPSCEQVLYRIALKENLEVCPKC.

It belongs to the AccD/PCCB family. In terms of assembly, acetyl-CoA carboxylase is a heterohexamer composed of biotin carboxyl carrier protein (AccB), biotin carboxylase (AccC) and two subunits each of ACCase subunit alpha (AccA) and ACCase subunit beta (AccD). Zn(2+) is required as a cofactor.

Its subcellular location is the cytoplasm. The catalysed reaction is N(6)-carboxybiotinyl-L-lysyl-[protein] + acetyl-CoA = N(6)-biotinyl-L-lysyl-[protein] + malonyl-CoA. The protein operates within lipid metabolism; malonyl-CoA biosynthesis; malonyl-CoA from acetyl-CoA: step 1/1. Component of the acetyl coenzyme A carboxylase (ACC) complex. Biotin carboxylase (BC) catalyzes the carboxylation of biotin on its carrier protein (BCCP) and then the CO(2) group is transferred by the transcarboxylase to acetyl-CoA to form malonyl-CoA. This is Acetyl-coenzyme A carboxylase carboxyl transferase subunit beta 2 from Vibrio campbellii (strain ATCC BAA-1116).